A 44-amino-acid polypeptide reads, in one-letter code: Protein PsbN (44 aa).

A helical membrane pass occupies residues 6-26 (FFFSLFVWCLLLSITAYSLYV).

This sequence belongs to the PsbN family.

It localises to the plastid. Its subcellular location is the chloroplast thylakoid membrane. Functionally, may play a role in photosystem I and II biogenesis. The protein is Protein PsbN of Tupiella akineta (Green alga).